The sequence spans 387 residues: Protein RecA (387 aa).

80 to 87 (GPESSGKT) contacts ATP. The segment at 348 to 387 (LDDSEVAETEEETTASKTKAKAKKEEKXVETEEIELELQD) is disordered. Composition is skewed to acidic residues over residues 349–360 (DDSEVAETEEET) and 378–387 (TEEIELELQD).

The protein belongs to the RecA family.

It is found in the cytoplasm. Its function is as follows. Can catalyze the hydrolysis of ATP in the presence of single-stranded DNA, the ATP-dependent uptake of single-stranded DNA by duplex DNA, and the ATP-dependent hybridization of homologous single-stranded DNAs. It interacts with LexA causing its activation and leading to its autocatalytic cleavage. The polypeptide is Protein RecA (Lactococcus lactis subsp. cremoris (Streptococcus cremoris)).